The sequence spans 341 residues: Dual oxidase maturation factor 1 (341 aa).

Over 1–24 (MAALGHTLPFYTGTKPTFPMDTTL) the chain is Extracellular. Residues 25-45 (AVIITIFLTALVTFIIILPGI) traverse the membrane as a helical segment. Residues 46 to 51 (RGKTRL) are Cytoplasmic-facing. A helical transmembrane segment spans residues 52–72 (FWLLRVVTSLFIGAVILAVNF). Residues 73–183 (SSEWSVGHVN…RLAGHYASAM (111 aa)) lie on the Extracellular side of the membrane. Residues N84, N109, and N121 are each glycosylated (N-linked (GlcNAc...) asparagine). Residues 184–204 (LWVAFLCWLLANVMLSMPVLV) traverse the membrane as a helical segment. A topological domain (cytoplasmic) is located at residue Y205. A helical transmembrane segment spans residues 206 to 226 (GGHMLLATGLFQLLALFFFSM). The Extracellular portion of the chain corresponds to 227 to 249 (TTSLISPCPLRLGTAVLHTHHGP). Residues 250–270 (AFWITLATGLLCILLGLVMAV) traverse the membrane as a helical segment. Residues 271–341 (AHRMQPHRLK…EHPKESDCSL (71 aa)) are Cytoplasmic-facing.

The protein belongs to the DUOXA family. In terms of assembly, may interact with NUMB.

Its subcellular location is the membrane. In terms of biological role, may be required for the maturation and the transport from the endoplasmic reticulum to the plasma membrane of functional DUOX1. The protein is Dual oxidase maturation factor 1 (Duoxa1) of Mus musculus (Mouse).